A 1219-amino-acid chain; its full sequence is Cullin-associated NEDD8-dissociated protein 1 (1219 aa).

Ala-2 is modified (N-acetylalanine). HEAT repeat units follow at residues 44–81 (DLEVRLSSIILQQLDDVAGDVSGLAVKCLAPLVKKVGE), 83–119 (RIVEMTNKLCDKLLHGKDQHRDTASIALRTVVAQIAP), 209–244 (KATVEVVKNLSNRNAKSEITRTNIQMIGALCRAVGY), 248–288 (THLG…RCPR), 327–363 (EEDDESANEYTDDEDASWKVRRAAAKCLAGLIVSRSE), 367–404 (KVYQEACPKLIDRFKEREENVKMDVFNTFIDLLRQTGN), 423–460 (QEVSKIVKSINRQLREKSVKTKVGAFSVLRELVVVLPD), 464–503 (DHIGSLVPGIERALNDKSSTSNLKIEALVFTKLVLASHAP), 599–636 (AELPSCLPVLVDRMGNEITRLTAVKAFSVIATSPLHIN), 639–676 (CVLDHLIAELTGFLRKANRVLRQATLITMNTLVTAYGD), 808–848 (KNCS…RKDL), 850–883 (AHAGIETIVIESFQSPFEEIKSAASYALGNIAVG), 927–964 (SSVEKILALLFNHCESEEEGVRNVVAECLGKMALIEPE), 966–998 (LVPALQVRTTSPAAFTRATVVTAVKYSVVERPE), 1002–1039 (EIIFPQISSFLMLIKDGDRHVRRAAVSALSTFAHYKPN), 1043–1079 (GLLPELLPLLYDQTVIKKELIRTVDLGPFKHVVDDGL), 1101–1137 (NPSSFIVPFLKSGLEDHYDLKMLCHLILSLLADKCPS), and 1141–1180 (AVLDSLVEPLHKTISFKPKQDAVKQEHDRNEDMIRSALRA). The tract at residues 311–340 (FTDNMEEDTDNETLEDEEDDESANEYTDDE) is disordered. The segment covering 314-340 (NMEEDTDNETLEDEEDDESANEYTDDE) has biased composition (acidic residues).

Belongs to the CAND family. As to quaternary structure, interacts with CUL1 and CUL4. Binds unneddylated CUL1, but cannot bind CUL1 once it has been neddylated. Highly expressed in roots. Expressed in stems, flowers and siliques.

Its function is as follows. Key assembly factor of SCF (SKP1-CUL1-F-box protein) E3 ubiquitin ligase complexes that promotes the exchange of the substrate-recognition F-box subunit in SCF complexes, thereby playing a key role in the cellular repertoire of SCF complexes. Acts as a F-box protein exchange factor. Required for SCF(TIR1) function. Modulates SCF(TIR1) function through its interactions with the CUL1 subunit. Represses photomorphogenesis by promoting HY5 degradation in darkness. The polypeptide is Cullin-associated NEDD8-dissociated protein 1 (CAND1) (Arabidopsis thaliana (Mouse-ear cress)).